The sequence spans 257 residues: Pyridoxine 5'-phosphate synthase (257 aa).

Asn-6 is a binding site for 3-amino-2-oxopropyl phosphate. Residue 8-9 participates in 1-deoxy-D-xylulose 5-phosphate binding; the sequence is DH. Residue Arg-17 coordinates 3-amino-2-oxopropyl phosphate. His-41 functions as the Proton acceptor in the catalytic mechanism. Arg-43 and His-48 together coordinate 1-deoxy-D-xylulose 5-phosphate. Catalysis depends on Glu-68, which acts as the Proton acceptor. Thr-98 provides a ligand contact to 1-deoxy-D-xylulose 5-phosphate. The active-site Proton donor is His-210. Residues Gly-211 and 232 to 233 contribute to the 3-amino-2-oxopropyl phosphate site; that span reads GQ.

The protein belongs to the PNP synthase family. In terms of assembly, homooctamer; tetramer of dimers.

The protein localises to the cytoplasm. It catalyses the reaction 3-amino-2-oxopropyl phosphate + 1-deoxy-D-xylulose 5-phosphate = pyridoxine 5'-phosphate + phosphate + 2 H2O + H(+). It participates in cofactor biosynthesis; pyridoxine 5'-phosphate biosynthesis; pyridoxine 5'-phosphate from D-erythrose 4-phosphate: step 5/5. Catalyzes the complicated ring closure reaction between the two acyclic compounds 1-deoxy-D-xylulose-5-phosphate (DXP) and 3-amino-2-oxopropyl phosphate (1-amino-acetone-3-phosphate or AAP) to form pyridoxine 5'-phosphate (PNP) and inorganic phosphate. The polypeptide is Pyridoxine 5'-phosphate synthase (Campylobacter jejuni subsp. jejuni serotype O:6 (strain 81116 / NCTC 11828)).